Here is an 822-residue protein sequence, read N- to C-terminus: Serine/threonine-protein kinase kin-29 (822 aa).

A Protein kinase domain is found at 16-267 (YDVGRAIGKG…IQNVLQHRWM (252 aa)). Residues 22 to 30 (IGKGNFATV) and K45 each bind ATP. D138 (proton acceptor) is an active-site residue. Disordered regions lie at residues 348-367 (EGTG…LSGK), 389-423 (LSSP…RQFG), and 577-602 (NPIP…WASP). Residues 394 to 406 (CDSDDSSNSDLCD) are compositionally biased toward acidic residues.

Belongs to the protein kinase superfamily. CAMK Ser/Thr protein kinase family. SNF1 subfamily. In terms of assembly, interacts with tax-6. The cofactor is Mg(2+). Autophosphorylated. Elevated cAMP levels appears to act via PKA to directly or indirectly phosphorylate multiple sites on kin-29 and inhibit function. In terms of tissue distribution, primarily neuronal, with additional expression in body wall muscle and hypodermal cells. Among neuronal cells, expressed in multiple sensory neurons and interneurons in the lateral, anterior, and lumbar ganglia, as well as in motor neurons in the ventral motor cord. Present in the AWB and AWC olfactory neurons.

The protein resides in the cytoplasm. It localises to the nucleus. It carries out the reaction L-seryl-[protein] + ATP = O-phospho-L-seryl-[protein] + ADP + H(+). The catalysed reaction is L-threonyl-[protein] + ATP = O-phospho-L-threonyl-[protein] + ADP + H(+). Regulates chemoreceptor expression by phosphorylating the hda-4 class II histone deacetylase (HDAC) and inhibiting the gene repression functions of hda-4 and the mef-2 transcription factor, enabling the correct sensing and transduction of food signals. Role in determining body size, the dauer decision and serotonin-mediated egg laying. May modulate the Sma/Mab pathway and regulates development in the later larval stages. The polypeptide is Serine/threonine-protein kinase kin-29 (Caenorhabditis elegans).